The chain runs to 352 residues: 4-hydroxy-3-methylbut-2-en-1-yl diphosphate synthase (flavodoxin) (352 aa).

Residues cysteine 265, cysteine 268, cysteine 300, and glutamate 307 each contribute to the [4Fe-4S] cluster site.

Belongs to the IspG family. The cofactor is [4Fe-4S] cluster.

It catalyses the reaction (2E)-4-hydroxy-3-methylbut-2-enyl diphosphate + oxidized [flavodoxin] + H2O + 2 H(+) = 2-C-methyl-D-erythritol 2,4-cyclic diphosphate + reduced [flavodoxin]. It participates in isoprenoid biosynthesis; isopentenyl diphosphate biosynthesis via DXP pathway; isopentenyl diphosphate from 1-deoxy-D-xylulose 5-phosphate: step 5/6. In terms of biological role, converts 2C-methyl-D-erythritol 2,4-cyclodiphosphate (ME-2,4cPP) into 1-hydroxy-2-methyl-2-(E)-butenyl 4-diphosphate. This chain is 4-hydroxy-3-methylbut-2-en-1-yl diphosphate synthase (flavodoxin), found in Persephonella marina (strain DSM 14350 / EX-H1).